Here is a 133-residue protein sequence, read N- to C-terminus: Sigma factor-binding protein Crl (133 aa).

Residues 99–122 (TLDDFYVKLTKFVKEDCQLDLQAS) form an essential for activity region.

This sequence belongs to the Crl family.

Its subcellular location is the cytoplasm. Binds to the sigma-S subunit of RNA polymerase, activating expression of sigma-S-regulated genes. Stimulates RNA polymerase holoenzyme formation and may bind to several other sigma factors, such as sigma-70 and sigma-32. The chain is Sigma factor-binding protein Crl from Photobacterium profundum (strain SS9).